A 216-amino-acid polypeptide reads, in one-letter code: 3-isopropylmalate dehydratase small subunit (216 aa).

The protein belongs to the LeuD family. LeuD type 1 subfamily. Heterodimer of LeuC and LeuD.

It carries out the reaction (2R,3S)-3-isopropylmalate = (2S)-2-isopropylmalate. Its pathway is amino-acid biosynthesis; L-leucine biosynthesis; L-leucine from 3-methyl-2-oxobutanoate: step 2/4. Catalyzes the isomerization between 2-isopropylmalate and 3-isopropylmalate, via the formation of 2-isopropylmaleate. This chain is 3-isopropylmalate dehydratase small subunit, found in Ralstonia nicotianae (strain ATCC BAA-1114 / GMI1000) (Ralstonia solanacearum).